The following is a 383-amino-acid chain: Probable L-tyrosine/L-aspartate decarboxylase (383 aa).

Lys-227 is modified (N6-(pyridoxal phosphate)lysine).

The protein belongs to the group II decarboxylase family. MfnA subfamily. The cofactor is pyridoxal 5'-phosphate.

It catalyses the reaction L-tyrosine + H(+) = tyramine + CO2. The catalysed reaction is L-aspartate + H(+) = beta-alanine + CO2. Its pathway is cofactor biosynthesis; methanofuran biosynthesis. The protein operates within cofactor biosynthesis; coenzyme A biosynthesis. Functionally, catalyzes the decarboxylation of L-tyrosine to produce tyramine for methanofuran biosynthesis. Can also catalyze the decarboxylation of L-aspartate to produce beta-alanine for coenzyme A (CoA) biosynthesis. The sequence is that of Probable L-tyrosine/L-aspartate decarboxylase from Methanothrix thermoacetophila (strain DSM 6194 / JCM 14653 / NBRC 101360 / PT) (Methanosaeta thermophila).